The following is a 378-amino-acid chain: Zinc transporter 7 (378 aa).

Residues M1–N37 are Cytoplasmic-facing. A helical transmembrane segment spans residues L38–W58. Over S59 to D67 the chain is Lumenal. The helical transmembrane segment at S68–S88 threads the bilayer. Residues K89–R102 are Cytoplasmic-facing. Residues A103–F123 traverse the membrane as a helical segment. Topologically, residues S124–R140 are lumenal. The chain crosses the membrane as a helical span at residues L141 to H161. Positions H161–H220 are his-rich loop. At G162–G238 the chain is on the cytoplasmic side. The disordered stretch occupies residues S186–T228. The span at H204 to S224 shows a compositional bias: basic and acidic residues. A helical transmembrane segment spans residues V239–M259. Residues M260–G264 are Lumenal-facing. Residues L265–I285 form a helical membrane-spanning segment. Over P286 to M378 the chain is Cytoplasmic.

The protein belongs to the cation diffusion facilitator (CDF) transporter (TC 2.A.4) family. SLC30A subfamily. Homooligomer.

The protein resides in the golgi apparatus membrane. Its subcellular location is the cytoplasmic vesicle. It localises to the golgi apparatus. The protein localises to the trans-Golgi network. It is found in the sarcoplasmic reticulum. The protein resides in the mitochondrion. It carries out the reaction Zn(2+)(in) = Zn(2+)(out). Functionally, zinc ion transporter mediating zinc entry from the cytosol into the lumen of organelles along the secretory pathway. By contributing to zinc ion homeostasis within the early secretory pathway, regulates the activation and folding of enzymes like alkaline phosphatases. This Rattus norvegicus (Rat) protein is Zinc transporter 7.